We begin with the raw amino-acid sequence, 305 residues long: Heterogeneous nuclear ribonucleoprotein A0 (305 aa).

Position 1 is an N-acetylmethionine (Met-1). Residues 7-86 (CKLFIGGLNV…VELKRAVSRE (80 aa)) enclose the RRM 1 domain. A Phosphoserine modification is found at Ser-68. Lys-80 is covalently cross-linked (Glycyl lysine isopeptide (Lys-Gly) (interchain with G-Cter in SUMO2)). Ser-84 carries the post-translational modification Phosphoserine; by MAPKAPK2. Residues Lys-96, Lys-98, Lys-99, and Lys-106 each participate in a glycyl lysine isopeptide (Lys-Gly) (interchain with G-Cter in SUMO2) cross-link. In terms of domain architecture, RRM 2 spans 98 to 175 (KKLFVGGLKG…HRVEVKKAVP (78 aa)). N6-acetyllysine is present on Lys-133. Arg-139 carries the post-translational modification Omega-N-methylarginine. Residues Lys-154, Lys-159, Lys-172, and Lys-176 each participate in a glycyl lysine isopeptide (Lys-Gly) (interchain with G-Cter in SUMO2) cross-link. Disordered regions lie at residues 178 to 211 (DIHAGGGGARAARGGRGGGRGRGGGGGGGGRDQN) and 265 to 305 (QSSY…GGSF). Gly residues-rich tracts occupy residues 181-211 (AGGGGARAARGGRGGGRGRGGGGGGGGRDQN) and 272-284 (KSGGGGGGGGSWG). Arg-286 carries the post-translational modification Omega-N-methylarginine. Over residues 292–305 (YRGGYGGGYGGGSF) the composition is skewed to gly residues. Position 293 is an asymmetric dimethylarginine; alternate (Arg-293). Arg-293 carries the dimethylated arginine; alternate modification. Arg-293 bears the Omega-N-methylarginine; alternate mark.

Post-translationally, phosphorylated at Ser-84 by MAPKAPK2 in response to LPS treatment, promoting stabilization of GADD45A mRNA. Arg-293 is dimethylated, probably to asymmetric dimethylarginine.

The protein localises to the nucleus. In terms of biological role, mRNA-binding component of ribonucleosomes. Specifically binds AU-rich element (ARE)-containing mRNAs. Involved in post-transcriptional regulation of cytokines mRNAs. This is Heterogeneous nuclear ribonucleoprotein A0 (Hnrnpa0) from Mus musculus (Mouse).